The sequence spans 435 residues: F-box/FBD/LRR-repeat protein At5g44980 (435 aa).

Residues 3 to 49 form the F-box domain; sequence RDYISELPDSLLTQILLELRTKDSVKTSVLSKRWRNLWLNVPGLELF. 6 LRR repeats span residues 88–114, 138–162, 165–190, 191–217, 250–275, and 324–349; these read CKGY…YVFM, LHNV…KLEN, HGED…ELIR, PFDI…TLHF, VKNL…DLRM, and MWSS…ILEY. The FBD domain occupies 355-405; sequence REQVDFTNVPQCLISTLEYVEIKEPNEKSTIKLVNYFLENSAVLKKLTLRF.

This chain is F-box/FBD/LRR-repeat protein At5g44980, found in Arabidopsis thaliana (Mouse-ear cress).